The following is a 130-amino-acid chain: Small ribosomal subunit protein uS9 (130 aa).

Belongs to the universal ribosomal protein uS9 family.

The sequence is that of Small ribosomal subunit protein uS9 from Anoxybacillus flavithermus (strain DSM 21510 / WK1).